The sequence spans 756 residues: Xylosyl- and glucuronyltransferase LARGE1 (756 aa).

Over 1 to 10 (MLGICRGRRK) the chain is Cytoplasmic. Residues 11–31 (FLAASLTVLFVPAVTWIYLFA) traverse the membrane as a helical; Signal-anchor for type II membrane protein segment. At 32 to 756 (GSFEDGKPVS…LKYLTAENNS (725 aa)) the chain is on the lumenal side. 2 disordered regions span residues 42–63 (LSPL…RDRE) and 81–109 (KQLS…EGTG). Polar residues predominate over residues 44–58 (PLESQPHSPRYTASS). Residues 55–90 (TASSQRDRESLEVRMREVEEENRVLRKQLSLAQGRS) adopt a coiled-coil conformation. 3 N-linked (GlcNAc...) asparagine glycosylation sites follow: asparagine 97, asparagine 122, and asparagine 148. The tract at residues 138–413 (IHVAIVCAGY…FLEYDGNLLR (276 aa)) is xylosyltransferase activity. Mn(2+) contacts are provided by aspartate 242 and aspartate 244. Asparagine 272 carries N-linked (GlcNAc...) asparagine glycosylation. A glucuronyltransferase activity region spans residues 414–756 (RELFGCPSEA…LKYLTAENNS (343 aa)). The Mn(2+) site is built by aspartate 563 and aspartate 565.

In the C-terminal section; belongs to the glycosyltransferase 49 family. The protein in the N-terminal section; belongs to the glycosyltransferase 8 family. The cofactor is Mn(2+).

It localises to the golgi apparatus membrane. The catalysed reaction is 3-O-[beta-D-GlcA-(1-&gt;3)-beta-D-Xyl-(1-&gt;4)-Rib-ol-P-Rib-ol-P-3-beta-D-GalNAc-(1-&gt;3)-beta-D-GlcNAc-(1-&gt;4)-(O-6-P-alpha-D-Man)]-Thr-[protein] + UDP-alpha-D-xylose = 3-O-[alpha-D-Xyl-(1-&gt;3)-beta-D-GlcA-(1-&gt;4)-beta-D-Xyl-(1-&gt;4)-Rib-ol-P-Rib-ol-P-3-beta-D-GalNAc-(1-&gt;3)-beta-D-GlcNAc-(1-&gt;4)-(O-6-P-alpha-D-Man)]-Thr-[protein] + UDP + H(+). It catalyses the reaction 3-O-{(1-&gt;[3)-alpha-D-Xyl-(1-&gt;3)-beta-D-GlcA-(1-&gt;](n)-4)-beta-D-Xyl-(1-&gt;4)-Rib-ol-P-Rib-ol-P-3-beta-D-GalNAc-(1-&gt;3)-beta-D-GlcNAc-(1-&gt;4)-O-6-P-alpha-D-Man}-L-Thr-[protein] + UDP-alpha-D-glucuronate = 3-O-{beta-D-GlcA-(1-&gt;[3)-alpha-D-Xyl-(1-&gt;3)-beta-D-GlcA-(1-&gt;](n)-4)-beta-D-Xyl-(1-&gt;4)-Rib-ol-P-Rib-ol-P-3-beta-D-GalNAc-(1-&gt;3)-beta-D-GlcNAc-(1-&gt;4)-O-6-P-alpha-D-Man}-L-Thr-[protein] + UDP + H(+). The enzyme catalyses 3-O-{beta-D-GlcA-(1-&gt;[3)-alpha-D-Xyl-(1-&gt;3)-beta-D-GlcA-(1-&gt;](n)-4)-beta-D-Xyl-(1-&gt;4)-Rib-ol-P-Rib-ol-P-3-beta-D-GalNAc-(1-&gt;3)-beta-D-GlcNAc-(1-&gt;4)-O-6-P-alpha-D-Man}-L-Thr-[protein] + UDP-alpha-D-xylose = 3-O-{(1-&gt;[3)-alpha-D-Xyl-(1-&gt;3)-beta-D-GlcA-(1-&gt;](n+1)-4)-beta-D-Xyl-(1-&gt;4)-Rib-ol-P-Rib-ol-P-3-beta-D-GalNAc-(1-&gt;3)-beta-D-GlcNAc-(1-&gt;4)-O-6-P-alpha-D-Man}-L-Thr-[protein] + UDP + H(+). It participates in protein modification; protein glycosylation. Bifunctional glycosyltransferase with both alpha-1,3-xylosyltransferase and beta-1,3-glucuronyltransferase activities involved in the maturation of alpha-dystroglycan (DAG1) by glycosylation leading to DAG1 binding to laminin G-like domain-containing extracellular proteins with high affinity. Elongates the glucuronyl-beta-1,4-xylose-beta disaccharide primer structure initiated by B4GAT1 by adding repeating units [-3-Xylose-alpha-1,3-GlcA-beta-1-] to produce a heteropolysaccharide. Requires the phosphorylation of core M3 (O-mannosyl trisaccharide) by POMK to elongate the glucuronyl-beta-1,4-xylose-beta disaccharide primer. Plays a key role in skeletal muscle function and regeneration. The polypeptide is Xylosyl- and glucuronyltransferase LARGE1 (Gallus gallus (Chicken)).